Reading from the N-terminus, the 490-residue chain is Glutamate--tRNA ligase (490 aa).

Residues 12–22 (PSPTGTPHVGL) carry the 'HIGH' region motif. The 'KMSKS' region signature appears at 256 to 260 (KLSKR). Residue Lys-259 coordinates ATP.

The protein belongs to the class-I aminoacyl-tRNA synthetase family. Glutamate--tRNA ligase type 1 subfamily. In terms of assembly, monomer.

It localises to the cytoplasm. It carries out the reaction tRNA(Glu) + L-glutamate + ATP = L-glutamyl-tRNA(Glu) + AMP + diphosphate. Catalyzes the attachment of glutamate to tRNA(Glu) in a two-step reaction: glutamate is first activated by ATP to form Glu-AMP and then transferred to the acceptor end of tRNA(Glu). In Mycobacterium sp. (strain JLS), this protein is Glutamate--tRNA ligase.